The following is a 344-amino-acid chain: L-rhamnose-proton symporter (344 aa).

10 helical membrane-spanning segments follow: residues 4–24 (AITM…CFYA), 38–58 (WSVG…ATLL), 72–92 (TLLP…NYGL), 101–121 (MGIG…TPII), 131–151 (TQGG…VGIV), 175–195 (LLLA…MNAA), 214–234 (LPSY…FCFI), 259–279 (LLLS…YAWG), 290–310 (MSWM…GLVL), and 323–343 (VLSL…LGMA).

The protein belongs to the L-rhamnose transporter (TC 2.A.7.6) family.

It is found in the cell inner membrane. It carries out the reaction L-rhamnopyranose(in) + H(+)(in) = L-rhamnopyranose(out) + H(+)(out). Uptake of L-rhamnose across the cytoplasmic membrane with the concomitant transport of protons into the cell (symport system). This Klebsiella pneumoniae (strain 342) protein is L-rhamnose-proton symporter.